The sequence spans 381 residues: Spermidine/putrescine import ATP-binding protein PotA (381 aa).

The region spanning 22-252 (VELRNVFKFF…PKTSFVADFI (231 aa)) is the ABC transporter domain. Residue 54 to 61 (GPSGCGKT) participates in ATP binding.

This sequence belongs to the ABC transporter superfamily. Spermidine/putrescine importer (TC 3.A.1.11.1) family. The complex is composed of two ATP-binding proteins (PotA), two transmembrane proteins (PotB and PotC) and a solute-binding protein (PotD).

It localises to the cell inner membrane. It carries out the reaction ATP + H2O + polyamine-[polyamine-binding protein]Side 1 = ADP + phosphate + polyamineSide 2 + [polyamine-binding protein]Side 1.. In terms of biological role, part of the ABC transporter complex PotABCD involved in spermidine/putrescine import. Responsible for energy coupling to the transport system. The chain is Spermidine/putrescine import ATP-binding protein PotA from Trichormus variabilis (strain ATCC 29413 / PCC 7937) (Anabaena variabilis).